The following is a 224-amino-acid chain: Abasic site processing protein YoqW (224 aa).

C2 acts as the Nucleophile in catalysis. C2 bears the Thiazolidine linkage to a ring-opened DNA abasic site mark. E106 is an active-site residue.

This sequence belongs to the SOS response-associated peptidase family.

Formation and reversal of DNA-protein cross-link depends on DNA context. Catalyzes formation of the thiazolidine linkage in presence of abasic sites in single-stranded DNA. Mediates the reversal of the thiazolidine cross-link in presence of double stranded DNA. Functionally, sensor of abasic sites in single-stranded DNA (ssDNA) required to preserve genome integrity by promoting error-free repair of abasic sites. Recognizes and binds abasic sites in ssDNA at replication forks and chemically modifies the lesion by forming a covalent cross-link with DNA: forms a stable thiazolidine linkage between a ring-opened abasic site and the alpha-amino and sulfhydryl substituents of its N-terminal catalytic cysteine residue. The DNA-protein cross-link is then reversed: able to catalyze the reversal of the thiazolidine cross-link and cycle between a cross-link and a non-cross-linked state depending on DNA context: mediates self-reversal of the thiazolidine cross-link in double stranded DNA. May act as a protease: mediates autocatalytic processing of its N-terminal methionine in order to expose the catalytic cysteine. The chain is Abasic site processing protein YoqW (yoqW) from Bacillus subtilis (strain 168).